The following is a 320-amino-acid chain: Cytochrome f (320 aa).

Residues 1-35 form the signal peptide; it reads MQNRNTFSWVKEQMTRFISVSIMIYVITRTSISNA. Heme-binding residues include Tyr-36, Cys-56, Cys-59, and His-60. A helical transmembrane segment spans residues 286–306; sequence VQGLLFFLASVILAQIFLVLK.

Belongs to the cytochrome f family. The 4 large subunits of the cytochrome b6-f complex are cytochrome b6, subunit IV (17 kDa polypeptide, petD), cytochrome f and the Rieske protein, while the 4 small subunits are PetG, PetL, PetM and PetN. The complex functions as a dimer. The cofactor is heme.

It localises to the plastid. It is found in the chloroplast thylakoid membrane. Its function is as follows. Component of the cytochrome b6-f complex, which mediates electron transfer between photosystem II (PSII) and photosystem I (PSI), cyclic electron flow around PSI, and state transitions. This is Cytochrome f from Liriodendron tulipifera (Tuliptree).